The chain runs to 449 residues: MRLKELLPNFLIVHQEVPEDPIAFKSTDKRENENKEITIPELIDTKVPELADGATDTLYGLLVNGHLQTAYGSFRHFDNIYKVQYKRMIIKYPHGGEGTVDFAVNGRSTKRRKVEKEYVPTSQPVFNGNLKRRYSYYSPDDPKLNSDDAKPMLIILHGLTGGSRESYVRAIVHEITTKYDFEACVFNARGCCYSAITTPLLYNGGWTNDIRYCVNDLRKRFPNRKFYMMGFSLGASIMTNYLGEESDRTKIECAISVSNPFDLYNSAYFINSTPMGSRFYSPALGHNLLRMVRNHLSTLEENPDFKDVIEKHLKKIRTVRQFDNLLTGPMFGYKNAEEYYKNASSYKRIPGIRTPFIALHAQDDPIVGGDLPIDQIKSNPYTLLLETSTGGHVGWFKDRSGRRWYAEPLCRFLKIFHDEITVKGLKPDLENVQLPDPNCEPIATTFRAN.

Residue K82 forms a Glycyl lysine isopeptide (Lys-Gly) (interchain with G-Cter in ubiquitin) linkage. One can recognise an AB hydrolase-1 domain in the interval 151–392; it reads PMLIILHGLT…LLLETSTGGH (242 aa). A GXSXG motif is present at residues 230-234; sequence GFSLG. Residue S232 is the Nucleophile of the active site. Catalysis depends on charge relay system residues D364 and H392.

The protein belongs to the AB hydrolase superfamily. AB hydrolase 4 family.

It catalyses the reaction Hydrolyzes glycerol monoesters of long-chain fatty acids.. The catalysed reaction is 1-hexadecanoylglycerol + H2O = glycerol + hexadecanoate + H(+). It carries out the reaction 1-octadecanoylglycerol + H2O = octadecanoate + glycerol + H(+). The enzyme catalyses 1-(9Z-octadecenoyl)-glycerol + H2O = glycerol + (9Z)-octadecenoate + H(+). Functionally, converts monoacylglycerides (MAG) to free fatty acids and glycerol. Has a preference for palmitoyl-MAG. Does not play a significant role in ethyl ester biosynthesis. Also possesses ester hydrolase and low but persistent TAG lipase activity. The sequence is that of Monoacylglycerol lipase from Saccharomyces cerevisiae (strain ATCC 204508 / S288c) (Baker's yeast).